Here is a 574-residue protein sequence, read N- to C-terminus: Transmembrane glycoprotein NMB (574 aa).

Positions M1–A22 are cleaved as a signal peptide. Residues K23 to N502 lie on the Extracellular side of the membrane. N-linked (GlcNAc...) asparagine glycosylation is found at N93, N134, N200, N249, N275, N296, N300, N306, and N312. Residues L250–P338 form the PKD domain. A disordered region spans residues P320–P353. Residues G321 to L345 show a composition bias toward pro residues. 2 N-linked (GlcNAc...) asparagine glycosylation sites follow: N463 and N471. The helical transmembrane segment at G503 to Y523 threads the bilayer. Over K524–L574 the chain is Cytoplasmic. S546 is subject to Phosphoserine. Positions R558–D560 match the Cell attachment site motif.

This sequence belongs to the PMEL/NMB family. In terms of tissue distribution, may be up-regulated in bone metastatic breast cancer cells.

The protein resides in the cell membrane. Its subcellular location is the melanosome membrane. The protein localises to the early endosome membrane. Functionally, could be a melanogenic enzyme. The chain is Transmembrane glycoprotein NMB (Gpnmb) from Mus musculus (Mouse).